A 121-amino-acid chain; its full sequence is Large ribosomal subunit protein bL20 (121 aa).

The protein belongs to the bacterial ribosomal protein bL20 family.

Binds directly to 23S ribosomal RNA and is necessary for the in vitro assembly process of the 50S ribosomal subunit. It is not involved in the protein synthesizing functions of that subunit. This Moorella thermoacetica (strain ATCC 39073 / JCM 9320) protein is Large ribosomal subunit protein bL20.